We begin with the raw amino-acid sequence, 374 residues long: Dispase autolysis-inducing protein (374 aa).

The N-terminal stretch at 1–26 (MKRMGWAVTAAVTTIVLAQSSLAAQA) is a signal peptide.

Its subcellular location is the secreted. Its function is as follows. Induces autolysis of dispase and thermolysin. This Streptomyces mobaraensis (Streptoverticillium mobaraense) protein is Dispase autolysis-inducing protein (daip).